The sequence spans 549 residues: Beta-hexosaminidase Amuc_0868 (549 aa).

An N-terminal signal peptide occupies residues 1–28; the sequence is MISKCTFSATVFSLFSLCWGAPSSPVLE. Residue Arg161 coordinates substrate. Residues Asp190 and His260 each act as charge relay system in the active site. Asp326 is a binding site for substrate. Glu327 acts as the Charge relay system in catalysis. Substrate is bound by residues Trp393, 420–422, and 474–476; these read YFD and WTE. The segment at 526–549 is disordered; the sequence is GVNYKRPDNGAPAQPKAVITRERR.

It belongs to the glycosyl hydrolase 20 family.

It carries out the reaction Hydrolysis of terminal non-reducing N-acetyl-D-hexosamine residues in N-acetyl-beta-D-hexosaminides.. Its activity is regulated as follows. Inhibited strongly by Cu(2+), Zn(2+), Cd(2+) and Ni(2+) ions. No effect on activity with Na(+), Li(+), K(+), Ca(2+), Mg(2+) or Mn(2+) ions. Its function is as follows. Potentially capable of cleaving the specific glycoside linkages in the process of mucin degradation in human intestinal tract. Hydrolyzes chromogenic substrates pNP-beta-GlcNAc with high activity and pNP-beta-GalNAc to a lesser extent, but not pNP-beta-glucose or pNP-beta-galactose. This is Beta-hexosaminidase Amuc_0868 from Akkermansia muciniphila (strain ATCC BAA-835 / DSM 22959 / JCM 33894 / BCRC 81048 / CCUG 64013 / CIP 107961 / Muc).